We begin with the raw amino-acid sequence, 135 residues long: Small ribosomal subunit protein uS12 (135 aa).

Asp-89 carries the post-translational modification 3-methylthioaspartic acid. The disordered stretch occupies residues 114–135 (RSRYGAKKGAAKQAAAAKSKKK). Over residues 124 to 135 (AKQAAAAKSKKK) the composition is skewed to low complexity.

This sequence belongs to the universal ribosomal protein uS12 family. As to quaternary structure, part of the 30S ribosomal subunit. Contacts proteins S8 and S17. May interact with IF1 in the 30S initiation complex.

With S4 and S5 plays an important role in translational accuracy. In terms of biological role, interacts with and stabilizes bases of the 16S rRNA that are involved in tRNA selection in the A site and with the mRNA backbone. Located at the interface of the 30S and 50S subunits, it traverses the body of the 30S subunit contacting proteins on the other side and probably holding the rRNA structure together. The combined cluster of proteins S8, S12 and S17 appears to hold together the shoulder and platform of the 30S subunit. The protein is Small ribosomal subunit protein uS12 of Amoebophilus asiaticus (strain 5a2).